We begin with the raw amino-acid sequence, 963 residues long: Seizure 6-like protein (963 aa).

An N-terminal signal peptide occupies residues 1-31; sequence MPVARPQAAGPDRISLFLVAFLLGSPAAAQA. Disordered stretches follow at residues 28-63, 116-150, and 164-204; these read AAQAEDGGPEGEMHPSTAYLLPSASLESSLEEGVTS, RPLATPTTLQRLGSPASATTKLREPEDPEQPTAPA, and LPHS…TTTS. At 32 to 897 the chain is on the extracellular side; it reads EDGGPEGEMH…ESSLEGGNMA (866 aa). The span at 47–59 shows a compositional bias: low complexity; sequence LLPSASLESSLEE. The segment covering 120-135 has biased composition (polar residues); it reads TPTTLQRLGSPASATT. Residues 191–204 show a composition bias toward low complexity; the sequence is TGSASEESQETTTS. A disulfide bridge connects residues Cys-221 and Cys-248. Positions 221–329 constitute a CUB 1 domain; it reads CGVSFSDPEG…GTFQLHYQAF (109 aa). 3 N-linked (GlcNAc...) asparagine glycosylation sites follow: Asn-251, Asn-268, and Asn-290. The 60-residue stretch at 331–390 folds into the Sushi 1 domain; sequence LSCPFPRRPDAGEVTVMDLHSGGVAHFHCHLGYELQGAKTLTCINASKPHWSSQEPVCSA. Intrachain disulfides connect Cys-333-Cys-373, Cys-359-Cys-388, and Cys-392-Cys-419. N-linked (GlcNAc...) asparagine glycans are attached at residues Asn-375, Asn-398, Asn-414, Asn-454, Asn-516, and Asn-558. The 111-residue stretch at 392 to 502 folds into the CUB 2 domain; sequence CGGAVHNATI…SAFNIRFEAF (111 aa). One can recognise a Sushi 2 domain in the interval 505-566; that stretch reads GHCYEPYIQN…WNDTEPLCRA (62 aa). 3 cysteine pairs are disulfide-bonded: Cys-507–Cys-549, Cys-534–Cys-564, and Cys-568–Cys-594. The CUB 3 domain maps to 568–679; the sequence is CGGELSAVAG…QGFIMNYIEV (112 aa). 2 N-linked (GlcNAc...) asparagine glycosylation sites follow: Asn-614 and Asn-682. Sushi domains are found at residues 683–742, 744–807, and 811–872; these read DSCS…FCEK, MYCT…HCVS, and LACD…ICKV. 6 disulfides stabilise this stretch: Cys-685/Cys-727, Cys-713/Cys-740, Cys-746/Cys-788, Cys-774/Cys-805, Cys-813/Cys-855, and Cys-841/Cys-870. The chain crosses the membrane as a helical span at residues 898–918; that stretch reads LAIFIPVLLISLLLGGAYIYV. Topologically, residues 919-963 are cytoplasmic; sequence TRCRQYSSLRLPLMYSHPYSQITVETEFDNPIYETGETREYEVSI.

This sequence belongs to the SEZ6 family. As to expression, expressed exclusively in the brain, predominantly in neurons. Wide expression in the gray matter of the brain with high levels in the olfactory bulb, anterior olfactory nuclei, hippocampal formation and cerebellar cortex. Detected diffusely and weakly in the white matter, such as the corpus callosum and cerebellar medulla. In the cerebellar cortex, intensely expressed in Purkinje cells and granule cells. Detected also in interneurons in the molecular layer.

It localises to the cell membrane. Its subcellular location is the endoplasmic reticulum membrane. Candidate tumor suppressor gene. May contribute to specialized endoplasmic reticulum functions in neurons. This Mus musculus (Mouse) protein is Seizure 6-like protein (Sez6l).